Consider the following 363-residue polypeptide: MIDPFKRFARPGLFLFDAETAHGLSIAGLKTSLMPKCHLPDDPRLAQTVAGLHFPNPLGMAAGYDKNAEVPDELLGLGFGFAEVGTLTPKPQGGNPKPRIFRLVRDEAVINRLGFNNQGHEAAFARLSARASRPGVVGINIGANKDAEDRIADYVTGIRRFYPLASYFTANISSPNTPGLRDLQAKDSLGHLLDAVLAARADEAAKAGRRVPVFLKIAPDLTEEGMDDIAEVVLARDLDGLIVSNTTLSRDGLTDTRQAGEAGGLSGKPLFEKSTAVLARMRHRVGSALPIIGVGGVSSAQTALEKIKAGADLVQLYSCMVYEGPGLPAAIVKGLSQALDRDGIASIAQLRDSRVDYWRALKV.

FMN contacts are provided by residues alanine 62 to lysine 66 and threonine 86. Lysine 66 serves as a coordination point for substrate. Asparagine 111 to phenylalanine 115 provides a ligand contact to substrate. 2 residues coordinate FMN: asparagine 140 and asparagine 171. Position 171 (asparagine 171) interacts with substrate. Serine 174 serves as the catalytic Nucleophile. Asparagine 176 contacts substrate. FMN is bound by residues lysine 216 and serine 244. Residue asparagine 245–threonine 246 participates in substrate binding. FMN-binding positions include glycine 267, glycine 296, and tyrosine 317–serine 318.

This sequence belongs to the dihydroorotate dehydrogenase family. Type 2 subfamily. As to quaternary structure, monomer. Requires FMN as cofactor.

The protein localises to the cell membrane. The catalysed reaction is (S)-dihydroorotate + a quinone = orotate + a quinol. It participates in pyrimidine metabolism; UMP biosynthesis via de novo pathway; orotate from (S)-dihydroorotate (quinone route): step 1/1. Its function is as follows. Catalyzes the conversion of dihydroorotate to orotate with quinone as electron acceptor. In Allorhizobium ampelinum (strain ATCC BAA-846 / DSM 112012 / S4) (Agrobacterium vitis (strain S4)), this protein is Dihydroorotate dehydrogenase (quinone).